A 269-amino-acid chain; its full sequence is MAVNVYSTSVTSDNLSRHDMLAWINESLQLNLTKIEQLCSGSVYCQFMDMLFPGSVVLKKVKFQAKLEHEYIQNFKVLQAGFKKMGVDKIIPVDKLVKGKFQDNFEFVQWFKKFFDANYDGKDYDPVAARQGQESAPVPVLAAPVLNKPKKPLGSGNTAPQRTVPVQRTAVSNKPPAQGISKKPATVGNGDDESAELIQQINVLKITVEDLEKERDFYFGKLRNIELICQENEGESDPVLQRIIEILYATDEGFVIPDEGAPPEDQEEY.

The Calponin-homology (CH) domain occupies 14–116 (NLSRHDMLAW…FVQWFKKFFD (103 aa)). The disordered stretch occupies residues 168–190 (RTAVSNKPPAQGISKKPATVGNG). The EB1 C-terminal domain occupies 186–256 (TVGNGDDESA…LYATDEGFVI (71 aa)).

The protein belongs to the MAPRE family.

It localises to the cytoplasm. Its subcellular location is the cytoskeleton. It is found in the microtubule organizing center. The protein localises to the centrosome. The protein resides in the golgi apparatus. It localises to the spindle. Its subcellular location is the spindle pole. In terms of biological role, plus-end tracking protein (+TIP) that binds to the plus-end of microtubules and regulates the dynamics of the microtubule cytoskeleton. Promotes cytoplasmic microtubule nucleation and elongation. Involved in mitotic spindle positioning by stabilizing microtubules and promoting dynamic connection between astral microtubules and the cortex during mitotic chromosome segregation. This Xenopus tropicalis (Western clawed frog) protein is Microtubule-associated protein RP/EB family member 1 (mapre1).